The sequence spans 133 residues: Protein Wnt-4 (133 aa).

The O-palmitoleoyl serine; by PORCN moiety is linked to residue Ser-1. Disulfide bonds link Cys-69–Cys-114 and Cys-99–Cys-109. Asn-100 carries N-linked (GlcNAc...) asparagine glycosylation.

It belongs to the Wnt family. In terms of processing, palmitoleoylation is required for efficient binding to frizzled receptors. Depalmitoleoylation leads to Wnt signaling pathway inhibition.

The protein resides in the secreted. It localises to the extracellular space. It is found in the extracellular matrix. Its function is as follows. Ligand for members of the frizzled family of seven transmembrane receptors. Plays an important role in embryonic development. The protein is Protein Wnt-4 (WNT-4) of Strongylocentrotus purpuratus (Purple sea urchin).